Consider the following 189-residue polypeptide: MIVILNNGGQYVHRIQRSLKYLGVPAKIVPNSTTLEEITVNPEIKGIILSGGPDITKATNCENIALNSEIPVLGICLGHQLISKAYGGHVSRADSEEYASIKIYVKEENDLFKGVPSEFTAWASHMDEVKVTPECFEILAYSDICGVESIKHKEKSLYGVQFHPEVSHTEYGDVLLKNFCKKCGFEFEE.

The 189-residue stretch at Met-1–Glu-189 folds into the Glutamine amidotransferase type-1 domain. The Nucleophile role is filled by Cys-76. Catalysis depends on residues His-163 and Glu-165.

As to quaternary structure, heterodimer composed of a glutamine amidotransferase subunit (A) and a GMP-binding subunit (B).

It catalyses the reaction XMP + L-glutamine + ATP + H2O = GMP + L-glutamate + AMP + diphosphate + 2 H(+). It participates in purine metabolism; GMP biosynthesis; GMP from XMP (L-Gln route): step 1/1. Functionally, catalyzes the synthesis of GMP from XMP. The chain is GMP synthase [glutamine-hydrolyzing] subunit A from Methanococcus maripaludis (strain C7 / ATCC BAA-1331).